Reading from the N-terminus, the 167-residue chain is CASP-like protein 3 (167 aa).

The Cytoplasmic portion of the chain corresponds to 1–2; sequence MK. The helical transmembrane segment at 3–23 threads the bilayer; that stretch reads IIAIAPRIGAAVLSLVAFSVM. Over 24-48 the chain is Extracellular; it reads ASTGERRSGAGSTFKVKFSDFQAYN. A helical transmembrane segment spans residues 49-69; sequence YLIALNVILFVYSTVQLVMLV. Residues 70-80 lie on the Cytoplasmic side of the membrane; sequence NSNHNSSFSSP. The helical transmembrane segment at 81 to 101 threads the bilayer; the sequence is FKWVLGVYICDQLLAFLLFSA. Residues 102-137 are Extracellular-facing; that stretch reads SSSAATASELSRHGLHNIWPPACATWKLWTFCSKAE. A helical transmembrane segment spans residues 138–158; the sequence is AAVAMSFLSSFFIITSSILSG. At 159-167 the chain is on the cytoplasmic side; the sequence is YHLSKVPAV.

This sequence belongs to the Casparian strip membrane proteins (CASP) family. As to quaternary structure, homodimer and heterodimers.

It localises to the cell membrane. The chain is CASP-like protein 3 from Osmunda lancea (Fern).